Consider the following 231-residue polypeptide: Small ribosomal subunit protein uS3c (231 aa).

Positions 39 to 123 constitute a KH type-2 domain; the sequence is LRNFIKKKYI…HLRLSVKPLR (85 aa).

Belongs to the universal ribosomal protein uS3 family. Part of the 30S ribosomal subunit.

The protein resides in the plastid. It is found in the chloroplast. The sequence is that of Small ribosomal subunit protein uS3c (rps3) from Chlorella vulgaris (Green alga).